Reading from the N-terminus, the 172-residue chain is RNA silencing suppressor p19 (172 aa).

Residues 1–20 (MERAIQGNDAREQANSERWD) show a composition bias toward basic and acidic residues. Positions 1 to 37 (MERAIQGNDAREQANSERWDGGSGGTTSPFKLPDESP) are disordered.

This sequence belongs to the tombusvirus protein p19 family. As to quaternary structure, homodimer.

Functionally, viral suppressor of RNA silencing which binds specifically to silencing RNAs (siRNAs). Acts as a molecular caliper to specifically select siRNAs based on the length of the duplex region of the RNA. In Tomato bushy stunt virus (strain Ja6) (TBSV), this protein is RNA silencing suppressor p19.